The sequence spans 168 residues: Cell division inhibitor SulA (168 aa).

The ftsZ binding stretch occupies residues 105–111; it reads ALETGNY. The lon protease binding stretch occupies residues 161-168; sequence RIHSRMVH.

Belongs to the SulA family. In terms of assembly, interacts with FtsZ. Post-translationally, is rapidly cleaved and degraded by the Lon protease once DNA damage is repaired.

Component of the SOS system and an inhibitor of cell division. Accumulation of SulA causes rapid cessation of cell division and the appearance of long, non-septate filaments. In the presence of GTP, binds a polymerization-competent form of FtsZ in a 1:1 ratio, thus inhibiting FtsZ polymerization and therefore preventing it from participating in the assembly of the Z ring. This mechanism prevents the premature segregation of damaged DNA to daughter cells during cell division. This Cronobacter turicensis (strain DSM 18703 / CCUG 55852 / LMG 23827 / z3032) protein is Cell division inhibitor SulA.